Reading from the N-terminus, the 127-residue chain is Ribonuclease VapC6 (127 aa).

One can recognise a PINc domain in the interval 26–120; sequence EPQRAEFCRS…ERHLPDIRVR (95 aa). D86 provides a ligand contact to Mg(2+).

Belongs to the PINc/VapC protein family. It depends on Mg(2+) as a cofactor.

Functionally, toxic component of a type II toxin-antitoxin (TA) system. An RNase. The cognate antitoxin is VapB6. This chain is Ribonuclease VapC6, found in Mycobacterium tuberculosis (strain CDC 1551 / Oshkosh).